The sequence spans 334 residues: Syntaxin-18 (334 aa).

At 1–308 the chain is on the cytoplasmic side; the sequence is MAVDITLLFR…EDIREAIKNN (308 aa). 2 disordered regions span residues 29 to 50 and 166 to 225; these read GGAD…GDFS and LSKL…GEDE. Basic and acidic residues-rich tracts occupy residues 33–50 and 166–182; these read GSRD…GDFS and LSKL…DSTS. The span at 183–192 shows a compositional bias: polar residues; that stretch reads EKAPQNASQD. Over residues 193-207 the composition is skewed to basic and acidic residues; it reads SEGKPAAEELPEKPL. Residues 242 to 304 form the t-SNARE coiled-coil homology domain; it reads IGEMNSLFDE…KEGNEDIREA (63 aa). Residues 309–329 traverse the membrane as a helical; Anchor for type IV membrane protein segment; sequence AGFRVWILFFLVMCSFSLLFL. At 330-334 the chain is on the lumenal side; that stretch reads DWYDS.

It belongs to the syntaxin family. As to quaternary structure, component of a SNARE complex consisting of STX18, USE1L, BNIP1/SEC20L, and SEC22B. RINT1/TIP20L and ZW10 are associated with the complex through interaction with BNIP1/SEC20L. Interacts directly with USE1L and BNIP1/SEC20L.

Its subcellular location is the endoplasmic reticulum membrane. It localises to the golgi apparatus membrane. In terms of biological role, syntaxin that may be involved in targeting and fusion of Golgi-derived retrograde transport vesicles with the ER. This Mus musculus (Mouse) protein is Syntaxin-18 (Stx18).